Reading from the N-terminus, the 188-residue chain is Elongation factor P (188 aa).

Lys-34 is modified (N6-(3,6-diaminohexanoyl)-5-hydroxylysine).

It belongs to the elongation factor P family. In terms of processing, may be beta-lysylated on the epsilon-amino group of Lys-34 by the combined action of EpmA and EpmB, and then hydroxylated on the C5 position of the same residue by EpmC (if this protein is present). Lysylation is critical for the stimulatory effect of EF-P on peptide-bond formation. The lysylation moiety may extend toward the peptidyltransferase center and stabilize the terminal 3-CCA end of the tRNA. Hydroxylation of the C5 position on Lys-34 may allow additional potential stabilizing hydrogen-bond interactions with the P-tRNA.

The protein resides in the cytoplasm. It participates in protein biosynthesis; polypeptide chain elongation. Its function is as follows. Involved in peptide bond synthesis. Alleviates ribosome stalling that occurs when 3 or more consecutive Pro residues or the sequence PPG is present in a protein, possibly by augmenting the peptidyl transferase activity of the ribosome. Modification of Lys-34 is required for alleviation. This is Elongation factor P from Haemophilus influenzae (strain 86-028NP).